The primary structure comprises 62 residues: Large ribosomal subunit protein bL32 (62 aa).

The segment covering 1-16 has biased composition (basic residues); sequence MAVPKRKTSPSRRGMR. The interval 1–44 is disordered; it reads MAVPKRKTSPSRRGMRRSADALKAPTYVEDKDSGELRRPHHIDL. Basic and acidic residues predominate over residues 28–44; it reads VEDKDSGELRRPHHIDL.

The protein belongs to the bacterial ribosomal protein bL32 family.

The protein is Large ribosomal subunit protein bL32 of Methylorubrum extorquens (strain CM4 / NCIMB 13688) (Methylobacterium extorquens).